The following is a 532-amino-acid chain: Pyruvate kinase (532 aa).

Arg-63 is a substrate binding site. Residues Asn-65, Ser-67, Asp-99, and Thr-100 each coordinate K(+). Position 65–68 (65–68 (NFSH)) interacts with ATP. ATP is bound by residues Arg-106 and Lys-191. Glu-256 is a binding site for Mg(2+). Positions 279, 280, and 312 each coordinate substrate. Position 280 (Asp-280) interacts with Mg(2+).

The protein belongs to the pyruvate kinase family. In terms of assembly, homotetramer. Mg(2+) serves as cofactor. K(+) is required as a cofactor.

The enzyme catalyses pyruvate + ATP = phosphoenolpyruvate + ADP + H(+). It functions in the pathway carbohydrate degradation; glycolysis; pyruvate from D-glyceraldehyde 3-phosphate: step 5/5. This Agaricus bisporus (White button mushroom) protein is Pyruvate kinase (pkiA).